We begin with the raw amino-acid sequence, 147 residues long: Hemoglobin subunit delta (147 aa).

Residues 3–147 (HLTPEEKAAV…VATALAHKYH (145 aa)) enclose the Globin domain. Heme b-binding residues include His64 and His93.

This sequence belongs to the globin family. In terms of assembly, heterotetramer of two delta chains and two alpha chains. As to expression, red blood cells.

This chain is Hemoglobin subunit delta (HBD), found in Ateles geoffroyi (Black-handed spider monkey).